A 388-amino-acid chain; its full sequence is Amylovoran biosynthesis protein AmsL (388 aa).

The next 6 membrane-spanning stretches (helical) occupy residues 24 to 44 (VLLS…ISWF), 47 to 67 (LPQL…LGSL), 97 to 117 (FTVI…LGLF), 231 to 251 (FVIM…SPVI), 297 to 317 (FYWN…VWIW), and 359 to 379 (ISVS…NLFI).

Belongs to the polysaccharide synthase family.

It localises to the cell membrane. Its pathway is glycan metabolism; exopolysaccharide biosynthesis. Its function is as follows. Involved in the biosynthesis of amylovoran which functions as a virulence factor. The polypeptide is Amylovoran biosynthesis protein AmsL (amsL) (Erwinia amylovora (Fire blight bacteria)).